The chain runs to 394 residues: Ceramide glucosyltransferase-A (394 aa).

The Lumenal portion of the chain corresponds to methionine 1–glycine 10. Residues leucine 11–tyrosine 32 form a helical membrane-spanning segment. Residues threonine 33–arginine 195 are Cytoplasmic-facing. Position 92 (aspartate 92) is a short sequence motif, D1. Residue aspartate 144 is a short sequence motif, D2. Residues serine 196–methionine 215 traverse the membrane as a helical segment. The Lumenal portion of the chain corresponds to arginine 216 to threonine 287. A short sequence motif (D3) is located at residue aspartate 236. The Proton acceptor role is filled by aspartate 236. Residues arginine 272–tryptophan 276 carry the (Q/R)XXRW motif. Residues isoleucine 288 to glycine 304 traverse the membrane as a helical segment. The Cytoplasmic segment spans residues tryptophan 305–histidine 309. Residues isoleucine 310–isoleucine 328 form a helical membrane-spanning segment. Residues phenylalanine 329–aspartate 348 are Lumenal-facing. Residues tyrosine 349–tryptophan 369 form a helical membrane-spanning segment. The Cytoplasmic segment spans residues aspartate 370 to valine 394.

The protein belongs to the glycosyltransferase 2 family. At the late gastrula stage, weakly expressed ubiquitously. As neurulation proceeds (stages 15-16), expression moves towards the dorsal structures: involuted paraxial mesoderm and neural folds. In the tailbud embryo (stage 28), expression is restricted to the notochord. At later stages (stage 35), expression remains in the notochord and also appears weakly in the cephalic region.

It localises to the golgi apparatus membrane. It catalyses the reaction an N-acylsphing-4-enine + UDP-alpha-D-glucose = a beta-D-glucosyl-(1&lt;-&gt;1')-N-acylsphing-4-enine + UDP + H(+). It carries out the reaction UDP-alpha-D-xylose + an N-acylsphing-4-enine = a beta-D-xylosyl-(1&lt;-&gt;1')-N-acylsphing-4-enine + UDP + H(+). The catalysed reaction is N-(9Z-octadecenoyl)-sphing-4-enine + UDP-alpha-D-xylose = beta-D-xylosyl-(1&lt;-&gt;1')-N-(9Z-octadecenoyl)-sphing-4-enine + UDP + H(+). Its pathway is lipid metabolism; sphingolipid metabolism. In terms of biological role, participates in the initial step of the glucosylceramide-based glycosphingolipid/GSL synthetic pathway at the cytosolic surface of the Golgi. Catalyzes the transfer of glucose from UDP-glucose to ceramide to produce glucosylceramide/GlcCer (such as beta-D-glucosyl-(1&lt;-&gt;1')-N-acylsphing-4-enine). Glucosylceramide is the core component of glycosphingolipids/GSLs, amphipathic molecules consisting of a ceramide lipid moiety embedded in the outer leaflet of the membrane, linked to one of hundreds of different externally oriented oligosaccharide structures. Glycosphingolipids are essential components of membrane microdomains that mediate membrane trafficking and signal transduction. They are implicated in many fundamental cellular processes, including growth, differentiation, migration, morphogenesis, cell-to-cell and cell-to-matrix interactions. Glycosphingolipids are required for convergence extension movements during early development. Catalyzes the synthesis of xylosylceramide/XylCer (such as beta-D-xylosyl-(1&lt;-&gt;1')-N-acylsphing-4-enine) using UDP-Xyl as xylose donor. The chain is Ceramide glucosyltransferase-A (ugcg-a) from Xenopus laevis (African clawed frog).